Consider the following 263-residue polypeptide: 3'-5' ssDNA/RNA exonuclease TatD (263 aa).

Residues Glu-92, His-128, and His-153 each coordinate a divalent metal cation.

It belongs to the metallo-dependent hydrolases superfamily. TatD-type hydrolase family. TatD subfamily. Monomer. Mg(2+) is required as a cofactor.

Its subcellular location is the cytoplasm. Its function is as follows. 3'-5' exonuclease that prefers single-stranded DNA and RNA. May play a role in the H(2)O(2)-induced DNA damage repair. In Rahnella sp. (strain Y9602), this protein is 3'-5' ssDNA/RNA exonuclease TatD.